The primary structure comprises 503 residues: uncharacterized protein (503 aa).

Composition is skewed to basic and acidic residues over residues 1-23 and 203-215; these read MAHE…EKVR and PLEK…RSDQ. Disordered stretches follow at residues 1-29 and 149-227; these read MAHE…TVPV and ETFQ…SNSS. Residues serine 239 and serine 243 each carry the phosphoserine modification. Disordered stretches follow at residues 346-370 and 450-475; these read LDPA…GAKW and LLSS…GAPK. Over residues 347 to 356 the composition is skewed to basic and acidic residues; it reads DPARLPRPDM.

This is an uncharacterized protein from Bos taurus (Bovine).